We begin with the raw amino-acid sequence, 355 residues long: Erythronate-4-phosphate dehydrogenase (355 aa).

Ser45 and Thr66 together coordinate substrate. Residue Asp146 participates in NAD(+) binding. Arg206 is an active-site residue. Asp229 provides a ligand contact to NAD(+). Glu234 is a catalytic residue. The active-site Proton donor is His251. Gly254 contacts NAD(+). Tyr255 serves as a coordination point for substrate.

It belongs to the D-isomer specific 2-hydroxyacid dehydrogenase family. PdxB subfamily. As to quaternary structure, homodimer.

It is found in the cytoplasm. It catalyses the reaction 4-phospho-D-erythronate + NAD(+) = (R)-3-hydroxy-2-oxo-4-phosphooxybutanoate + NADH + H(+). Its pathway is cofactor biosynthesis; pyridoxine 5'-phosphate biosynthesis; pyridoxine 5'-phosphate from D-erythrose 4-phosphate: step 2/5. Catalyzes the oxidation of erythronate-4-phosphate to 3-hydroxy-2-oxo-4-phosphonooxybutanoate. This is Erythronate-4-phosphate dehydrogenase from Acinetobacter baumannii (strain AB307-0294).